The chain runs to 313 residues: E3 ubiquitin-protein ligase SINA-like 2 (313 aa).

A disordered region spans residues 1–26 (MSGEASTSRRKRQRVPSSVESVENGG). The RING-type zinc finger occupies 44–80 (CPICCHALTSPIFQCDNGHIACSSCCTKLRNKCPSCA). Positions 94 to 277 (VVEAVMVTCP…LKMEICIRKL (184 aa)) are SBD. An SIAH-type zinc finger spans residues 97–155 (AVMVTCPNVKHGCTEKFSYGKELIHEKDCRFALCYCPAPNCNYSGVYKDLYSHFYVNHY). Zn(2+) contacts are provided by Cys-102, Cys-109, His-121, Cys-125, Cys-132, Cys-137, His-149, and His-154. Residues 278-313 (KKDEEEADEDEESEEEEDDDDDDDDDDEEEDADEEE) are disordered. Positions 282–313 (EEADEDEESEEEEDDDDDDDDDDEEEDADEEE) are enriched in acidic residues.

The protein belongs to the SINA (Seven in absentia) family.

The enzyme catalyses S-ubiquitinyl-[E2 ubiquitin-conjugating enzyme]-L-cysteine + [acceptor protein]-L-lysine = [E2 ubiquitin-conjugating enzyme]-L-cysteine + N(6)-ubiquitinyl-[acceptor protein]-L-lysine.. The protein operates within protein modification; protein ubiquitination. Its function is as follows. E3 ubiquitin-protein ligase that mediates ubiquitination and subsequent proteasomal degradation of target proteins. E3 ubiquitin ligases accept ubiquitin from an E2 ubiquitin-conjugating enzyme in the form of a thioester and then directly transfers the ubiquitin to targeted substrates. It probably triggers the ubiquitin-mediated degradation of different substrates. The polypeptide is E3 ubiquitin-protein ligase SINA-like 2 (Arabidopsis thaliana (Mouse-ear cress)).